The chain runs to 61 residues: Large ribosomal subunit protein bL32 (61 aa).

Positions 1 to 16 are enriched in basic residues; that stretch reads MAVPKKKTSKSRKNMR. Residues 1–20 are disordered; it reads MAVPKKKTSKSRKNMRRAHD.

The protein belongs to the bacterial ribosomal protein bL32 family.

The sequence is that of Large ribosomal subunit protein bL32 from Pelobacter propionicus (strain DSM 2379 / NBRC 103807 / OttBd1).